We begin with the raw amino-acid sequence, 250 residues long: 23S rRNA (guanosine-2'-O-)-methyltransferase RlmB (250 aa).

S-adenosyl-L-methionine is bound by residues glycine 197, isoleucine 217, and methionine 226.

The protein belongs to the class IV-like SAM-binding methyltransferase superfamily. RNA methyltransferase TrmH family. RlmB subfamily.

It localises to the cytoplasm. The catalysed reaction is guanosine(2251) in 23S rRNA + S-adenosyl-L-methionine = 2'-O-methylguanosine(2251) in 23S rRNA + S-adenosyl-L-homocysteine + H(+). In terms of biological role, specifically methylates the ribose of guanosine 2251 in 23S rRNA. The polypeptide is 23S rRNA (guanosine-2'-O-)-methyltransferase RlmB (Neisseria meningitidis serogroup B (strain ATCC BAA-335 / MC58)).